Here is a 237-residue protein sequence, read N- to C-terminus: ADTIVAVELDTYPNTDIGDPSYPHIGIDIKSVRSKKTAKWNMQNGKVGTAHIIYNSVGKRLSAVVSYPNGDSATVSYDVDLDNVLPEWVRVGLSASTGLYKETNTILSWSFTSKLKSNSTHETNALHFVFNQFSKDQKDLILQGDATTGTDGNLELTRVSSNGSPQGNSVGRALFYAPVHIWESSAVVASFDATFTFLIKSSDSHPADGIAFFISNIDSSIPSGSTGRLLGLFPDAN.

Mn(2+) is bound by residues Glu8 and Asp10. Ca(2+) is bound by residues Asp10, Tyr12, Asn14, and Asp19. Tyr12 serves as a coordination point for a carbohydrate. Residues Asp19 and His24 each coordinate Mn(2+). Position 99–100 (99–100 (LY)) interacts with a carbohydrate. A Ca(2+)-binding site is contributed by Asp208. A carbohydrate is bound at residue Arg228.

The protein belongs to the leguminous lectin family. In terms of assembly, homotetramer.

Functionally, glucose/D-mannose specific lectin. This Canavalia lineata (Beach bean) protein is Concanavalin-A.